The primary structure comprises 184 residues: NADH-quinone oxidoreductase subunit B (184 aa).

Residues C37, C38, C103, and C132 each contribute to the [4Fe-4S] cluster site.

This sequence belongs to the complex I 20 kDa subunit family. NDH-1 is composed of 14 different subunits. Subunits NuoB, C, D, E, F, and G constitute the peripheral sector of the complex. [4Fe-4S] cluster is required as a cofactor.

It is found in the cell membrane. It carries out the reaction a quinone + NADH + 5 H(+)(in) = a quinol + NAD(+) + 4 H(+)(out). Its function is as follows. NDH-1 shuttles electrons from NADH, via FMN and iron-sulfur (Fe-S) centers, to quinones in the respiratory chain. The immediate electron acceptor for the enzyme in this species is believed to be a menaquinone. Couples the redox reaction to proton translocation (for every two electrons transferred, four hydrogen ions are translocated across the cytoplasmic membrane), and thus conserves the redox energy in a proton gradient. This chain is NADH-quinone oxidoreductase subunit B, found in Mycobacterium sp. (strain JLS).